The following is a 292-amino-acid chain: Fat storage-inducing transmembrane protein 1 (292 aa).

The Lumenal portion of the chain corresponds to 1-18 (MERGPVVGAGLGAGARIQ). A helical transmembrane segment spans residues 19–39 (ALLGCLLKVLLWVASALLYFG). The Cytoplasmic segment spans residues 40–54 (SEQAARLLGSPCLRR). Residues 55-75 (LYHAWLAAVVIFGPLLQFHVN) form a helical membrane-spanning segment. The Lumenal portion of the chain corresponds to 76 to 94 (PRTIFASHGNFFNIKFVNS). Residues 95 to 115 (AWGWTCTFLGGFVLLVVFLAT) form a helical membrane-spanning segment. The Cytoplasmic portion of the chain corresponds to 116–141 (RRVAVTARHLSRLVVGAAVWRGAGRA). A helical membrane pass occupies residues 142 to 162 (FLLIEDLTGSCFEPLPQGLLL). The Lumenal portion of the chain corresponds to 163–187 (HELPDRRSCLAAGHQWRGYTVSSHT). His186 is a catalytic residue. The helical transmembrane segment at 188-208 (FLLTFCCLLMAEEAAVFAKYL) threads the bilayer. The Cytoplasmic portion of the chain corresponds to 209 to 220 (AHGLPAGAPLRL). The helical transmembrane segment at 221 to 241 (VFLLNVLLLGLWNFLLLCTVI) threads the bilayer. The Lumenal segment spans residues 242 to 249 (YFHQYTHK). Residue His244 is part of the active site. Residues 250–270 (VVGAAVGTFAWYLTYGSWYHQ) traverse the membrane as a helical segment. The Cytoplasmic portion of the chain corresponds to 271-292 (PWSPGSPGHGLFPRPHSSRKHN).

It belongs to the FIT family. FIT1 subfamily. In terms of tissue distribution, primarily expressed in heart and skeletal muscle.

The protein localises to the endoplasmic reticulum membrane. In terms of biological role, plays an important role in the formation of lipid droplets (LDs) which are storage organelles at the center of lipid and energy homeostasis. Directly binds to diacylglycerol (DAGs) and triacylglycerol. This chain is Fat storage-inducing transmembrane protein 1, found in Homo sapiens (Human).